Here is a 458-residue protein sequence, read N- to C-terminus: MEKVKIEEIQSTAKKQRIATHTHIKGLGLEPTGIPIKLAAGFVGQLEAREAAGLVVDMIKQKKMAGKALLLAGPPGTGKTALALGISQELGSKVPFCPMVGSEVYSSEVKKTEVLMENFRRAIGLRIKETKEVYEGEVTELSPEETESLTGGYGKSISHVVITLKTVKGTKHLKLDPTIYDALIKEKVAVGDVIYIEANSGAVKRVGRSDAFATEFDLEAEEYVPLPKGEVHKKKEIVQDVTLQDLDAANARPQGGQDILSLMGQMMKPRKTEITDKLRQEINKVVNRYIDEGVAELVPGVLFIDEVHMLDMECFSYLNRALESSLSPIVIFATNRGVCNVRGTDMPSPHGVPIDLLDRLVIIRTQIYDPSEMIQIIAIRAQVEELTVDEECLVLLGEIGQRTSLRHAVQLLSPASIVAKMNGRDNICKADIEEVTSLYLDAKSSAKLLHEQQEKYIS.

73–80 (GPPGTGKT) serves as a coordination point for ATP.

Belongs to the RuvB family. Interacts with FRI, and with FLX and FES1, two component of the transcription activator complex FRI-C. Interacts with the disease resistance genes RPM1 and RPP5.

The protein localises to the nucleus. It catalyses the reaction ATP + H2O = ADP + phosphate + H(+). Functionally, proposed core component of the chromatin remodeling INO80 complex which is involved in transcriptional regulation, DNA replication and probably DNA repair. Component of the NuA4 histone acetyltransferase complex which is involved in transcriptional activation of select genes principally by acetylation of nucleosomal histones H4 and H2A. Has single-stranded DNA-stimulated ATPase and ATP-dependent DNA helicase (3' to 5') activity suggesting a role in nuclear processes such as recombination and transcription. The chain is RuvB-like protein 1 (RIN1) from Arabidopsis thaliana (Mouse-ear cress).